The primary structure comprises 142 residues: Galectin-16 (142 aa).

Residues 6–138 (VPYKLPVSLS…DVSLDSVLVN (133 aa)) enclose the Galectin domain.

In terms of tissue distribution, predominantly and highly expressed in the placenta where it is localized mainly in the syncytiotrophoblast and in the endothelia of fetal vessels. Also detected in the amnion and chorionic trophoblasts in fetal membranes.

In terms of biological role, binds lactose with high affinity. Strong inducer of T-cell apoptosis. The chain is Galectin-16 from Homo sapiens (Human).